A 248-amino-acid polypeptide reads, in one-letter code: Anamorsin homolog (248 aa).

An N-terminal SAM-like domain region spans residues 4–129 (FKGLQKSLYI…ETGSSARLSF (126 aa)). Residues 130 to 161 (AKKNASAVNVWKISGDDEELIDEEELLDEEDK) form a linker region. Positions 172, 181, 184, and 186 each coordinate [2Fe-2S] cluster. Residues 172–186 (CSTTGKRKACKNCSC) form a fe-S binding site A region. 4 residues coordinate [4Fe-4S] cluster: Cys209, Cys212, Cys220, and Cys223. 2 consecutive short sequence motifs (cx2C motif) follow at residues 209–212 (CGNC) and 220–223 (CSTC). Residues 209 to 223 (CGNCYLGDAFRCSTC) are fe-S binding site B.

Belongs to the anamorsin family. Monomer. [2Fe-2S] cluster serves as cofactor. [4Fe-4S] cluster is required as a cofactor.

The protein resides in the cytoplasm. It is found in the mitochondrion intermembrane space. Component of the cytosolic iron-sulfur (Fe-S) protein assembly (CIA) machinery. Required for the maturation of extramitochondrial Fe-S proteins. Part of an electron transfer chain functioning in an early step of cytosolic Fe-S biogenesis, facilitating the de novo assembly of a [4Fe-4S] cluster on the cytosolic Fe-S scaffold complex. Electrons are transferred from NADPH via a FAD- and FMN-containing diflavin oxidoreductase. Together with the diflavin oxidoreductase, also required for the assembly of the diferric tyrosyl radical cofactor of ribonucleotide reductase (RNR), probably by providing electrons for reduction during radical cofactor maturation in the catalytic small subunit. The polypeptide is Anamorsin homolog (Drosophila yakuba (Fruit fly)).